Consider the following 364-residue polypeptide: Chorismate synthase (364 aa).

R48 provides a ligand contact to NADP(+). FMN is bound by residues 131 to 133 (RSS), 243 to 244 (NA), G288, 303 to 307 (KPTSS), and R329.

The protein belongs to the chorismate synthase family. As to quaternary structure, homotetramer. FMNH2 serves as cofactor.

The catalysed reaction is 5-O-(1-carboxyvinyl)-3-phosphoshikimate = chorismate + phosphate. The protein operates within metabolic intermediate biosynthesis; chorismate biosynthesis; chorismate from D-erythrose 4-phosphate and phosphoenolpyruvate: step 7/7. In terms of biological role, catalyzes the anti-1,4-elimination of the C-3 phosphate and the C-6 proR hydrogen from 5-enolpyruvylshikimate-3-phosphate (EPSP) to yield chorismate, which is the branch point compound that serves as the starting substrate for the three terminal pathways of aromatic amino acid biosynthesis. This reaction introduces a second double bond into the aromatic ring system. This Brucella anthropi (strain ATCC 49188 / DSM 6882 / CCUG 24695 / JCM 21032 / LMG 3331 / NBRC 15819 / NCTC 12168 / Alc 37) (Ochrobactrum anthropi) protein is Chorismate synthase.